A 258-amino-acid polypeptide reads, in one-letter code: Glutathione S-transferase DHAR3, chloroplastic (258 aa).

The N-terminal 42 residues, 1-42 (MISLRFQPSTTAGVLSASVSRAGFIKRCGSTKPGRVGRFVTM), are a transit peptide targeting the chloroplast. Position 52 is an S-glutathionyl cysteine (cysteine 52). Glutathione contacts are provided by lysine 54 and aspartate 65. 2 residues coordinate L-ascorbate: lysine 54 and aspartate 65. A GST N-terminal domain is found at 56–129 (SITTPNKLGD…DVITQALEEK (74 aa)). Catalysis depends on cysteine 66, which acts as the Nucleophile. Residues cysteine 66 and cysteine 69 are joined by a disulfide bond. The short motif at 66-71 (CPFCQK) is the Glutathione-binding element. 5 residues coordinate glutathione: lysine 93, valine 106, serine 119, histidine 205, and tryptophan 252. In terms of domain architecture, GST C-terminal spans 130–258 (YPEPPLATPP…IAGWRPKVMG (129 aa)). L-ascorbate is bound at residue lysine 255.

It belongs to the GST superfamily. DHAR family. In terms of assembly, monomer. Interacts with TRX3. Post-translationally, partial S-glutathionylation and intramolecular disulfide bond formation between Cys-66 and Cys-69 in the presence of oxidized glutathione (GSSG). Could be reduced by TRX-dependent process.

It localises to the plastid. The protein resides in the chloroplast stroma. It catalyses the reaction RX + glutathione = an S-substituted glutathione + a halide anion + H(+). It carries out the reaction L-dehydroascorbate + 2 glutathione = glutathione disulfide + L-ascorbate. In terms of biological role, displays a dual function. As a soluble protein, exhibits glutathione-dependent thiol transferase and dehydroascorbate (DHA) reductase activities. Key component of the ascorbate recycling system. Involved in the redox homeostasis, especially in scavenging of ROS under oxidative stresses. The protein is Glutathione S-transferase DHAR3, chloroplastic (DHAR3) of Arabidopsis thaliana (Mouse-ear cress).